The chain runs to 544 residues: Fructose dehydrogenase large subunit (544 aa).

Residue 14-30 (GAGICGSLLAHKLVRNG) coordinates FAD. Residue H478 is the Proton acceptor of the active site.

This sequence belongs to the GMC oxidoreductase family. In terms of assembly, heterotrimer composed of FdhL, FdhS and FdhC. It depends on FAD as a cofactor.

It localises to the cell membrane. The catalysed reaction is keto-D-fructose + a ubiquinone = 5-dehydro-D-fructose + a ubiquinol. In terms of biological role, catalytic subunit of fructose dehydrogenase, an enzyme that catalyzes the oxidation of D-fructose to produce 5-keto-D-fructose. The chain is Fructose dehydrogenase large subunit (fdhL) from Gluconobacter japonicus.